The sequence spans 478 residues: Adenosylhomocysteinase (478 aa).

The substrate site is built by threonine 67, aspartate 144, and glutamate 204. An NAD(+)-binding site is contributed by 205 to 207; the sequence is TTT. 2 residues coordinate substrate: lysine 234 and aspartate 238. Residues asparagine 239, 268 to 273, glutamate 291, asparagine 326, 347 to 349, and asparagine 392 contribute to the NAD(+) site; these read GYGDVG and IGH.

Belongs to the adenosylhomocysteinase family. It depends on NAD(+) as a cofactor.

It localises to the cytoplasm. It carries out the reaction S-adenosyl-L-homocysteine + H2O = L-homocysteine + adenosine. The protein operates within amino-acid biosynthesis; L-homocysteine biosynthesis; L-homocysteine from S-adenosyl-L-homocysteine: step 1/1. Functionally, may play a key role in the regulation of the intracellular concentration of adenosylhomocysteine. In Nitrosomonas eutropha (strain DSM 101675 / C91 / Nm57), this protein is Adenosylhomocysteinase.